The primary structure comprises 311 residues: Asialoglycoprotein receptor 2 (311 aa).

Positions 1 to 44 (MAKDFQDIQQLSSEENDHPFHQGEGPGTRRLNPRRGNPFLKGPP) are disordered. At 1 to 58 (MAKDFQDIQQLSSEENDHPFHQGEGPGTRRLNPRRGNPFLKGPPPAQPLAQRLCSMVC) the chain is on the cytoplasmic side. The Endocytosis signal signature appears at 5–8 (FQDI). Ser13 bears the Phosphoserine mark. Cys54 carries the S-palmitoyl cysteine lipid modification. A helical; Signal-anchor for type II membrane protein transmembrane segment spans residues 59-79 (FSLLALSFNILLLVVICVTGS). Topologically, residues 80 to 311 (QSEGHGGAQL…KRRNATGEVA (232 aa)) are extracellular. N-linked (GlcNAc...) asparagine glycans are attached at residues Asn102 and Asn170. Residues 176-302 (CCPVNWVEHQ…LQVYRWVCEK (127 aa)) enclose the C-type lectin domain. 3 cysteine pairs are disulfide-bonded: Cys177–Cys188, Cys205–Cys300, and Cys278–Cys292. N-linked (GlcNAc...) asparagine glycosylation is present at Asn305.

As to quaternary structure, the functioning ligand-binding unit of this receptor is thought to be at least a dimer. Interacts with LASS2. (Microbial infection) Interacts with hepatitis E virus capsid protein ORF2. In terms of tissue distribution, expressed exclusively in hepatic parenchymal cells.

It localises to the membrane. Functionally, mediates the endocytosis of plasma glycoproteins to which the terminal sialic acid residue on their complex carbohydrate moieties has been removed. The receptor recognizes terminal galactose and N-acetylgalactosamine units. After ligand binding to the receptor, the resulting complex is internalized and transported to a sorting organelle, where receptor and ligand are disassociated. The receptor then returns to the cell membrane surface. This is Asialoglycoprotein receptor 2 (ASGR2) from Homo sapiens (Human).